Consider the following 248-residue polypeptide: ATP synthase subunit a (248 aa).

6 consecutive transmembrane segments (helical) span residues 27–47 (FTNS…LMLV), 83–103 (FFPL…IGIV), 113–133 (LIVT…YGFS), 142–162 (LFVP…IEVI), 192–212 (FVAM…LPLG), and 215–235 (IALT…FAIL).

Belongs to the ATPase A chain family. As to quaternary structure, F-type ATPases have 2 components, CF(1) - the catalytic core - and CF(0) - the membrane proton channel. CF(1) has five subunits: alpha(3), beta(3), gamma(1), delta(1), epsilon(1). CF(0) has four main subunits: a, b, b' and c.

The protein resides in the cell inner membrane. Functionally, key component of the proton channel; it plays a direct role in the translocation of protons across the membrane. The polypeptide is ATP synthase subunit a (Rhodopseudomonas palustris (strain ATCC BAA-98 / CGA009)).